The sequence spans 362 residues: Cobalt-precorrin-5B C(1)-methyltransferase (362 aa).

This sequence belongs to the CbiD family.

It catalyses the reaction Co-precorrin-5B + S-adenosyl-L-methionine = Co-precorrin-6A + S-adenosyl-L-homocysteine. It participates in cofactor biosynthesis; adenosylcobalamin biosynthesis; cob(II)yrinate a,c-diamide from sirohydrochlorin (anaerobic route): step 6/10. In terms of biological role, catalyzes the methylation of C-1 in cobalt-precorrin-5B to form cobalt-precorrin-6A. The polypeptide is Cobalt-precorrin-5B C(1)-methyltransferase (Geobacter sulfurreducens (strain ATCC 51573 / DSM 12127 / PCA)).